The primary structure comprises 106 residues: UPF0145 protein Tpet_0165 (106 aa).

The protein belongs to the UPF0145 family.

The polypeptide is UPF0145 protein Tpet_0165 (Thermotoga petrophila (strain ATCC BAA-488 / DSM 13995 / JCM 10881 / RKU-1)).